The chain runs to 400 residues: Tryptophan synthase beta chain (400 aa).

N6-(pyridoxal phosphate)lysine is present on Lys92.

The protein belongs to the TrpB family. In terms of assembly, tetramer of two alpha and two beta chains. Requires pyridoxal 5'-phosphate as cofactor.

It carries out the reaction (1S,2R)-1-C-(indol-3-yl)glycerol 3-phosphate + L-serine = D-glyceraldehyde 3-phosphate + L-tryptophan + H2O. It participates in amino-acid biosynthesis; L-tryptophan biosynthesis; L-tryptophan from chorismate: step 5/5. Its function is as follows. The beta subunit is responsible for the synthesis of L-tryptophan from indole and L-serine. The protein is Tryptophan synthase beta chain of Neisseria meningitidis serogroup A / serotype 4A (strain DSM 15465 / Z2491).